A 466-amino-acid chain; its full sequence is Chromosomal replication initiator protein DnaA (466 aa).

The segment at 1–77 is domain I, interacts with DnaA modulators; the sequence is MSQEIWADVL…GAEHPQVEFQ (77 aa). The domain II stretch occupies residues 77–121; that stretch reads QVLPAAQDALLLPNDPPPAPEAAAPTPKTKAAPTPPPSTPGDNRK. Positions 87–122 are disordered; sequence LLPNDPPPAPEAAAPTPKTKAAPTPPPSTPGDNRKT. Over residues 97 to 108 the composition is skewed to low complexity; that stretch reads EAAAPTPKTKAA. The domain III, AAA+ region stretch occupies residues 122-338; sequence TLNPKYTFEN…GALMRVVAFA (217 aa). Residues Gly-166, Gly-168, Lys-169, and Thr-170 each coordinate ATP. The domain IV, binds dsDNA stretch occupies residues 339–466; it reads SLNNVPFSRA…GKEEEEEVGA (128 aa).

The protein belongs to the DnaA family. As to quaternary structure, oligomerizes as a right-handed, spiral filament on DNA at oriC.

The protein resides in the cytoplasm. Functionally, plays an essential role in the initiation and regulation of chromosomal replication. ATP-DnaA binds to the origin of replication (oriC) to initiate formation of the DNA replication initiation complex once per cell cycle. Binds the DnaA box (a 9 base pair repeat at the origin) and separates the double-stranded (ds)DNA. Forms a right-handed helical filament on oriC DNA; dsDNA binds to the exterior of the filament while single-stranded (ss)DNA is stabiized in the filament's interior. The ATP-DnaA-oriC complex binds and stabilizes one strand of the AT-rich DNA unwinding element (DUE), permitting loading of DNA polymerase. After initiation quickly degrades to an ADP-DnaA complex that is not apt for DNA replication. Binds acidic phospholipids. Strand separation requires the DnaA boxes and adjacent DnaA-trio motifs but works equally well with ADP or ATP. In Deinococcus radiodurans (strain ATCC 13939 / DSM 20539 / JCM 16871 / CCUG 27074 / LMG 4051 / NBRC 15346 / NCIMB 9279 / VKM B-1422 / R1), this protein is Chromosomal replication initiator protein DnaA.